A 218-amino-acid chain; its full sequence is Small ribosomal subunit protein uS3c (218 aa).

The 72-residue stretch at 47–118 (VQKHMRVSSG…RLNIAITRVA (72 aa)) folds into the KH type-2 domain.

The protein belongs to the universal ribosomal protein uS3 family. As to quaternary structure, part of the 30S ribosomal subunit.

The protein localises to the plastid. It localises to the chloroplast. The chain is Small ribosomal subunit protein uS3c (rps3) from Illicium oligandrum (Star anise).